An 81-amino-acid polypeptide reads, in one-letter code: Beta-catenin-interacting protein 1 (81 aa).

Ser59 carries the phosphoserine modification.

This sequence belongs to the CTNNBIP1 family. In terms of assembly, binds CTNNB1.

The protein localises to the cytoplasm. It is found in the nucleus. In terms of biological role, prevents the interaction between CTNNB1 and TCF family members, and acts as a negative regulator of the Wnt signaling pathway. The sequence is that of Beta-catenin-interacting protein 1 (CTNNBIP1) from Bos taurus (Bovine).